A 248-amino-acid polypeptide reads, in one-letter code: Adenosylcobinamide-GDP ribazoletransferase (248 aa).

The next 7 membrane-spanning stretches (helical) occupy residues E24–W44, I70–S90, V106–L126, I134–A154, T157–V177, L188–Y210, and A228–I248.

Belongs to the CobS family. The cofactor is Mg(2+).

It is found in the cell membrane. The enzyme catalyses alpha-ribazole + adenosylcob(III)inamide-GDP = adenosylcob(III)alamin + GMP + H(+). It catalyses the reaction alpha-ribazole 5'-phosphate + adenosylcob(III)inamide-GDP = adenosylcob(III)alamin 5'-phosphate + GMP + H(+). It participates in cofactor biosynthesis; adenosylcobalamin biosynthesis; adenosylcobalamin from cob(II)yrinate a,c-diamide: step 7/7. Its function is as follows. Joins adenosylcobinamide-GDP and alpha-ribazole to generate adenosylcobalamin (Ado-cobalamin). Also synthesizes adenosylcobalamin 5'-phosphate from adenosylcobinamide-GDP and alpha-ribazole 5'-phosphate. The polypeptide is Adenosylcobinamide-GDP ribazoletransferase (Listeria monocytogenes serotype 4b (strain CLIP80459)).